An 87-amino-acid polypeptide reads, in one-letter code: Small ribosomal subunit protein uS17 (87 aa).

It belongs to the universal ribosomal protein uS17 family. In terms of assembly, part of the 30S ribosomal subunit.

Its function is as follows. One of the primary rRNA binding proteins, it binds specifically to the 5'-end of 16S ribosomal RNA. This is Small ribosomal subunit protein uS17 from Anoxybacillus flavithermus (strain DSM 21510 / WK1).